A 238-amino-acid polypeptide reads, in one-letter code: SH2 domain-containing adapter protein F (238 aa).

2 disordered regions span residues 1-70 (MEPY…PWEW) and 85-121 (GSEN…EPSS). A Phosphoserine modification is found at Ser39. The span at 55–66 (EDDERPPEEYDQ) shows a compositional bias: acidic residues. Position 64 is a phosphotyrosine (Tyr64). The SH2 domain maps to 138–233 (WYHGAISRTD…AEHMSLLYPV (96 aa)).

Interacts with phosphorylated 'Tyr-720' of PDGFRA via its SH2 domain. May become phosphorylated upon binding to PDGFRA.

Its function is as follows. Adapter protein which may play a role in the regulation of apoptosis in response to PDGF. The chain is SH2 domain-containing adapter protein F from Mus musculus (Mouse).